Consider the following 150-residue polypeptide: UPF0178 protein PputGB1_5282 (150 aa).

The protein belongs to the UPF0178 family.

The chain is UPF0178 protein PputGB1_5282 from Pseudomonas putida (strain GB-1).